The following is a 123-amino-acid chain: Ribosome-binding factor A (123 aa).

Belongs to the RbfA family. As to quaternary structure, monomer. Binds 30S ribosomal subunits, but not 50S ribosomal subunits or 70S ribosomes.

It is found in the cytoplasm. Functionally, one of several proteins that assist in the late maturation steps of the functional core of the 30S ribosomal subunit. Associates with free 30S ribosomal subunits (but not with 30S subunits that are part of 70S ribosomes or polysomes). Required for efficient processing of 16S rRNA. May interact with the 5'-terminal helix region of 16S rRNA. The protein is Ribosome-binding factor A of Ralstonia nicotianae (strain ATCC BAA-1114 / GMI1000) (Ralstonia solanacearum).